Consider the following 427-residue polypeptide: ATP-dependent RNA helicase DDX39A (427 aa).

Residues 1–19 (MAEQDVENELLDYDEDEEP) are compositionally biased toward acidic residues. Positions 1 to 36 (MAEQDVENELLDYDEDEEPQAPQESTPAPPKKDVKG) are disordered. The residue at position 2 (Ala-2) is an N-acetylalanine. Lys-31 participates in a covalent cross-link: Glycyl lysine isopeptide (Lys-Gly) (interchain with G-Cter in SUMO2). An N6-acetyllysine; alternate modification is found at Lys-35. Lys-35 is covalently cross-linked (Glycyl lysine isopeptide (Lys-Gly) (interchain with G-Cter in SUMO2); alternate). Ser-37 bears the Phosphoserine mark. The Q motif signature appears at 44 to 72 (SGFRDFLLKPELLRAIVDCGFEHPSEVQH). Residues 75–248 (IPQAILGMDV…RKFMQDPMEV (174 aa)) form the Helicase ATP-binding domain. 88-95 (AKSGMGKT) serves as a coordination point for ATP. Residues Lys-154 and Lys-162 each participate in a glycyl lysine isopeptide (Lys-Gly) (interchain with G-Cter in SUMO2) cross-link. Position 171 is a phosphothreonine (Thr-171). Residues 195–198 (DECD) carry the DECD box motif. Glycyl lysine isopeptide (Lys-Gly) (interchain with G-Cter in SUMO2) cross-links involve residues Lys-240 and Lys-255. Residues 260-421 (GLQQYYVKLK…ELPEEIDIST (162 aa)) form the Helicase C-terminal domain. Ser-426 carries the post-translational modification Phosphoserine.

Belongs to the DEAD box helicase family. DECD subfamily. As to quaternary structure, binds ALYREF/THOC4 and DDX39B/BAT1. Interacts with the apo-AREX complex component SARNP. Interacts with MX1. Interacts with MCM3AP isoform GANP. Interacts with ECD. Interacts with PHAX; this interaction stimulates PHAX RNA binding activity. SUMOylated by RANBP2; SUMOylation modification affects its ability to bind RNA.

Its subcellular location is the nucleus. The protein resides in the cytoplasm. The enzyme catalyses ATP + H2O = ADP + phosphate + H(+). In terms of biological role, helicase that plays an essential role in mRNA export and is involved in multiple steps in RNA metabolism including alternative splicing. Regulates nuclear mRNA export to the cytoplasm through association with ECD. Also involved in spliceosomal uridine-rich small nuclear RNA (U snRNA) export by stimulating the RNA binding of adapter PHAX. Plays a role in the negative regulation of type I IFN production by increasing the nuclear retention of antiviral transcripts and thus reducing their protein expression. Independently of the interferon pathway, plays an antiviral role against alphaviruses by binding to a 5' conserved sequence element in the viral genomic RNA. This Mus musculus (Mouse) protein is ATP-dependent RNA helicase DDX39A.